The sequence spans 20 residues: Large ribosomal subunit protein bL33 (20 aa).

The protein belongs to the bacterial ribosomal protein bL33 family.

This Brevundimonas vesicularis (Pseudomonas vesicularis) protein is Large ribosomal subunit protein bL33 (rpmG).